Reading from the N-terminus, the 447-residue chain is Crotonyl-CoA reductase (447 aa).

This sequence belongs to the zinc-containing alcohol dehydrogenase family. Crotonyl-CoA carboxylase/reductase subfamily. Homodimer.

The catalysed reaction is butanoyl-CoA + NADP(+) = (2E)-butenoyl-CoA + NADPH + H(+). Inhibited by divalent cations (30-100%), beta-chloromercuribenzoate (85%), iodoacetamide (40%) and N-ethylmaleamide (80%). The presence of CoA thioesters containing 12-20 carbon atoms results in inhibition of enzyme activity. The greatest degree of inhibition is observed in the presence of palmitoyl-CoA and myristoyl-CoA. The branched-chain fatty acids, isopalmitoyl-CoA and isomyristoyl-CoA are less effective inhibitors of the crotonyl-CoA reductase. Concentrations of NADPH above 200 uM lead to inhibition of enzyme activity. Its function is as follows. May play a role in supplying butyryl-CoA for straight-chain fatty acid biosynthesis. Catalyzes the conversion of crotonyl-CoA to butyryl-CoA. It shows a high substrate specificity for crotonyl-CoA, a short-chain-length (C4), but no measurable activity is observed with shorter (C3) or longer-chain-length enoyl-CoA thioesters. This is Crotonyl-CoA reductase (ccr) from Streptomyces collinus.